A 1657-amino-acid chain; its full sequence is Putative serine/threonine-protein kinase/receptor R826 (1657 aa).

A signal peptide spans M1–C23. N-linked (GlcNAc...) asparagine; by host glycosylation is found at N153, N178, N238, N255, N352, N454, N476, N494, and N596. The helical transmembrane segment at I742–V762 threads the bilayer. In terms of domain architecture, Protein kinase 1 spans L786 to M1049. ATP is bound by residues L792–V800 and K813. Residue D909 is the Proton acceptor of the active site. Residues V1089–N1115 are disordered. One can recognise a Guanylate cyclase domain in the interval V1134–T1277. Residues I1399–F1651 enclose the Protein kinase 2 domain. ATP is bound by residues I1405–V1413 and K1426. The active-site Proton acceptor is the D1522.

The protein resides in the membrane. It catalyses the reaction L-seryl-[protein] + ATP = O-phospho-L-seryl-[protein] + ADP + H(+). The catalysed reaction is L-threonyl-[protein] + ATP = O-phospho-L-threonyl-[protein] + ADP + H(+). The sequence is that of Putative serine/threonine-protein kinase/receptor R826 from Acanthamoeba polyphaga mimivirus (APMV).